A 231-amino-acid chain; its full sequence is 7-cyano-7-deazaguanine synthase (231 aa).

An ATP-binding site is contributed by 8 to 18; that stretch reads FSGGQDSTTCL. Cys188, Cys197, Cys200, and Cys203 together coordinate Zn(2+).

Belongs to the QueC family. It depends on Zn(2+) as a cofactor.

The enzyme catalyses 7-carboxy-7-deazaguanine + NH4(+) + ATP = 7-cyano-7-deazaguanine + ADP + phosphate + H2O + H(+). It functions in the pathway purine metabolism; 7-cyano-7-deazaguanine biosynthesis. In terms of biological role, catalyzes the ATP-dependent conversion of 7-carboxy-7-deazaguanine (CDG) to 7-cyano-7-deazaguanine (preQ(0)). The sequence is that of 7-cyano-7-deazaguanine synthase from Escherichia fergusonii (strain ATCC 35469 / DSM 13698 / CCUG 18766 / IAM 14443 / JCM 21226 / LMG 7866 / NBRC 102419 / NCTC 12128 / CDC 0568-73).